Consider the following 218-residue polypeptide: Thymidylate kinase (218 aa).

Gly-15–Ser-22 contributes to the ATP binding site.

This sequence belongs to the thymidylate kinase family.

It carries out the reaction dTMP + ATP = dTDP + ADP. The protein operates within pyrimidine metabolism; dTTP biosynthesis. Catalyzes the conversion of dTMP to dTDP. This Caenorhabditis elegans protein is Thymidylate kinase.